Here is a 327-residue protein sequence, read N- to C-terminus: Probable cell division protein WhiA (327 aa).

The segment at residues 275-308 (SLEELGQLADPPMTKDAVAGRIRRLLSMADRKAK) is a DNA-binding region (H-T-H motif). The segment at 306–327 (KAKETGIPDTESAVTADLLDDA) is disordered.

It belongs to the WhiA family.

Involved in cell division and chromosome segregation. This is Probable cell division protein WhiA from Rhodococcus jostii (strain RHA1).